The primary structure comprises 2191 residues: FRAS1-related extracellular matrix protein 1 (2191 aa).

The signal sequence occupies residues 1 to 29; it reads MHSPGCTGPKAQWFLLLQLLLLHLDRVSA. Residues 205–207 carry the Cell attachment site motif; the sequence is RGD. 3 CSPG repeats span residues 300-394, 419-506, and 527-621; these read VPRA…MELE, APRV…FRIF, and PPFL…FVLW. The N-linked (GlcNAc...) asparagine glycan is linked to asparagine 341. 2 N-linked (GlcNAc...) asparagine glycosylation sites follow: asparagine 566 and asparagine 628. CSPG repeat units lie at residues 648–779, 801–892, and 912–1007; these read KEAP…VSVS, QVPE…LEVT, and EPPI…LVVS. Asparagine 1039 carries an N-linked (GlcNAc...) asparagine glycan. 6 CSPG repeats span residues 1049–1151, 1172–1273, 1294–1391, 1412–1504, 1525–1614, and 1650–1742; these read PPSI…VYAT, EAPD…IQLS, TPTL…FYLW, GDIV…FTIS, LPVL…FLAT, and HLHS…FQAM. Asparagine 1180 carries an N-linked (GlcNAc...) asparagine glycan. Residue asparagine 1584 is glycosylated (N-linked (GlcNAc...) asparagine). Residues 1749-1848 enclose the Calx-beta domain; it reads ATPQSLDLRW…DDEVFEVILN (100 aa). The interval 1874–1921 is disordered; that stretch reads HPSNSFNQSKHSTWGKGPWHPLPSGSSSLTTSGSPLLERPPPSFTSGD. A compositionally biased stretch (polar residues) spans 1875-1885; that stretch reads PSNSFNQSKHS. The span at 1895–1910 shows a compositional bias: low complexity; it reads LPSGSSSLTTSGSPLL. The 115-residue stretch at 2072–2186 folds into the C-type lectin domain; it reads HSGYCHILVT…CSKGKAHNFV (115 aa). Residues cysteine 2163 and cysteine 2177 are joined by a disulfide bond.

Belongs to the FRAS1 family. As to quaternary structure, interacts with FREM2. In terms of tissue distribution, expressed in epidermis and hair follicles. Expressed in many developing epidermal appendages, including the whisker and sensory vibrissae, cranial and trunk hair follicles, meibomian glands, teeth, footpads, eyelash primordia and invaginating mammary glands. Limb expression localizes to sheets of dermal cells on the apical and basal surfaces of the digits but, unlike FRAS1, is excluded from the apical ectodermal ridge. Usually expressed at higher level in dermal cells underlying the differentiating epithelial components, especially underlying the epidermis of the head, limbs, and eyelids. Expression in the eyelid dermis is apparent as early as 13 dpc. Postnatal expression in the skin is limited to the dermal papillae. In the kidney, it is expressed from 12.5 dpc in the mesenchyme surrounding the branching ureteric tree, with a strong expression in the more proximal regions of these tubules rather than at the proliferating and branching ends of the ureteric buds. In hair follicle, it is selectively expressed in the vibrissal hair primordia during development. Preferentially expressed in the whisker pad epithelia of 12.5 dpc embryos, in both the epithelial and mesenchymal cells of developing hair follicles. In the early stages of hair follicle development (i.e. stages 0-1), it is expressed in both hair placodes and dermal condensations. In stage 2, it is detected in dermal condensations and adjacent epithelia, but not in the upper region of the hair follicles. Expressed at the tip of developing hair follicles in the later stages (i.e. stages 3-5).

Its subcellular location is the secreted. The protein localises to the extracellular space. It localises to the extracellular matrix. It is found in the basement membrane. In terms of biological role, extracellular matrix protein that plays a role in epidermal differentiation and is required for epidermal adhesion during embryonic development. The protein is FRAS1-related extracellular matrix protein 1 (Frem1) of Mus musculus (Mouse).